The chain runs to 172 residues: Transmembrane protein 91 (172 aa).

Disordered stretches follow at residues 1–31 and 55–83; these read MDSPSLRELQQPLLEGTECETPAQKPGRHEL and PSVSAGLGEPRPPDVEDMSSSDSDSDWDG. Over 1 to 97 the chain is Extracellular; it reads MDSPSLRELQ…SPFLPHDHLG (97 aa). A compositionally biased stretch (acidic residues) spans 69–81; that stretch reads VEDMSSSDSDSDW. Residues 98–118 form a helical membrane-spanning segment; it reads LAVFSMLCCFWPVGIAAFCLA. The Cytoplasmic segment spans residues 119-139; it reads QKTNKAWAKGDIQGAGAASRR. Residues 140–160 form a helical membrane-spanning segment; that stretch reads AFLLGVLAVGLGVCTYAAALV. The Extracellular portion of the chain corresponds to 161-172; the sequence is TLAAYLASRDPP.

It belongs to the CD225/Dispanin family.

The protein resides in the membrane. This is Transmembrane protein 91 (TMEM91) from Homo sapiens (Human).